The following is a 379-amino-acid chain: ATP phosphoribosyltransferase regulatory subunit (379 aa).

Belongs to the class-II aminoacyl-tRNA synthetase family. HisZ subfamily. In terms of assembly, heteromultimer composed of HisG and HisZ subunits.

The protein localises to the cytoplasm. The protein operates within amino-acid biosynthesis; L-histidine biosynthesis; L-histidine from 5-phospho-alpha-D-ribose 1-diphosphate: step 1/9. Its function is as follows. Required for the first step of histidine biosynthesis. May allow the feedback regulation of ATP phosphoribosyltransferase activity by histidine. The sequence is that of ATP phosphoribosyltransferase regulatory subunit from Caldanaerobacter subterraneus subsp. tengcongensis (strain DSM 15242 / JCM 11007 / NBRC 100824 / MB4) (Thermoanaerobacter tengcongensis).